A 476-amino-acid polypeptide reads, in one-letter code: Cysteine--tRNA ligase (476 aa).

Zn(2+) is bound at residue cysteine 31. A 'HIGH' region motif is present at residues 33 to 43 (PTVYNYAHIGN). Positions 211, 236, and 240 each coordinate Zn(2+). Residues 269–273 (KMSKS) carry the 'KMSKS' region motif. Lysine 272 contributes to the ATP binding site.

The protein belongs to the class-I aminoacyl-tRNA synthetase family. As to quaternary structure, monomer. Zn(2+) serves as cofactor.

It is found in the cytoplasm. It catalyses the reaction tRNA(Cys) + L-cysteine + ATP = L-cysteinyl-tRNA(Cys) + AMP + diphosphate. This is Cysteine--tRNA ligase from Xanthomonas axonopodis pv. citri (strain 306).